We begin with the raw amino-acid sequence, 312 residues long: Mycothiol acetyltransferase (312 aa).

N-acetyltransferase domains lie at proline 8 to proline 136 and leucine 149 to histidine 301. Glutamate 38 contributes to the 1D-myo-inositol 2-(L-cysteinylamino)-2-deoxy-alpha-D-glucopyranoside binding site. Acetyl-CoA is bound by residues leucine 77–valine 79 and arginine 85–threonine 90. 1D-myo-inositol 2-(L-cysteinylamino)-2-deoxy-alpha-D-glucopyranoside contacts are provided by glutamate 175, lysine 215, and glutamate 226. Acetyl-CoA is bound by residues leucine 230–valine 232 and glutamate 237–arginine 243. A 1D-myo-inositol 2-(L-cysteinylamino)-2-deoxy-alpha-D-glucopyranoside-binding site is contributed by tyrosine 264. Acetyl-CoA is bound at residue asparagine 269–histidine 274. Residues proline 292–alanine 312 are disordered. Residues arginine 297–alanine 312 show a composition bias toward basic and acidic residues.

The protein belongs to the acetyltransferase family. MshD subfamily. Monomer.

It catalyses the reaction 1D-myo-inositol 2-(L-cysteinylamino)-2-deoxy-alpha-D-glucopyranoside + acetyl-CoA = mycothiol + CoA + H(+). Catalyzes the transfer of acetyl from acetyl-CoA to desacetylmycothiol (Cys-GlcN-Ins) to form mycothiol. The sequence is that of Mycothiol acetyltransferase from Propionibacterium freudenreichii subsp. shermanii (strain ATCC 9614 / DSM 4902 / CIP 103027 / NCIMB 8099 / CIRM-BIA1).